An 838-amino-acid polypeptide reads, in one-letter code: Protein translocase subunit SecA (838 aa).

ATP-binding positions include Q85, 103–107 (GEGKT), and D493. 4 residues coordinate Zn(2+): C823, C825, C834, and H835.

This sequence belongs to the SecA family. In terms of assembly, monomer and homodimer. Part of the essential Sec protein translocation apparatus which comprises SecA, SecYEG and auxiliary proteins SecDF. Other proteins may also be involved. It depends on Zn(2+) as a cofactor.

Its subcellular location is the cell membrane. It is found in the cytoplasm. The catalysed reaction is ATP + H2O + cellular proteinSide 1 = ADP + phosphate + cellular proteinSide 2.. In terms of biological role, part of the Sec protein translocase complex. Interacts with the SecYEG preprotein conducting channel. Has a central role in coupling the hydrolysis of ATP to the transfer of proteins into and across the cell membrane, serving as an ATP-driven molecular motor driving the stepwise translocation of polypeptide chains across the membrane. The protein is Protein translocase subunit SecA of Streptococcus gordonii (strain Challis / ATCC 35105 / BCRC 15272 / CH1 / DL1 / V288).